Here is a 173-residue protein sequence, read N- to C-terminus: Protein SUGARY ENHANCER 1 (173 aa).

Residues 1–31 (MIRPAPWVGAGHRGRGGEAGACTESLGSESG) form a disordered region.

The protein belongs to the fantastic four family.

Involved in starch metabolism in endosperm. Acts as a modifier of SUGARY1 (SU1), an isoamylase starch-debranching enzyme involved in amylopectin biosynthesis in endosperm. In Zea mays (Maize), this protein is Protein SUGARY ENHANCER 1.